The primary structure comprises 179 residues: Inosine/xanthosine triphosphatase (179 aa).

Glu-71 contacts Mg(2+). A substrate-binding site is contributed by 71-72 (EA).

This sequence belongs to the YjjX NTPase family. In terms of assembly, homodimer. Mg(2+) is required as a cofactor. It depends on Mn(2+) as a cofactor.

It carries out the reaction XTP + H2O = XDP + phosphate + H(+). The enzyme catalyses ITP + H2O = IDP + phosphate + H(+). Its function is as follows. Phosphatase that hydrolyzes non-canonical purine nucleotides such as XTP and ITP to their respective diphosphate derivatives. Probably excludes non-canonical purines from DNA/RNA precursor pool, thus preventing their incorporation into DNA/RNA and avoiding chromosomal lesions. This is Inosine/xanthosine triphosphatase from Shewanella sp. (strain MR-7).